Consider the following 369-residue polypeptide: Caffeine synthase 1 (369 aa).

An S-adenosyl-L-homocysteine-binding site is contributed by Tyr24. Thr31 is a caffeine binding site. Positions 66, 71, 103, 104, 138, and 139 each coordinate S-adenosyl-L-homocysteine. Tyr156, His159, and Trp160 together coordinate caffeine. Asn177 is a Mg(2+) binding site. Caffeine is bound at residue Arg225. Residues Asp263, Phe265, and Asn266 each contribute to the Mg(2+) site. Residue Phe321 participates in caffeine binding.

The protein belongs to the methyltransferase superfamily. Type-7 methyltransferase family. It depends on Mg(2+) as a cofactor.

It carries out the reaction theobromine + S-adenosyl-L-methionine = caffeine + S-adenosyl-L-homocysteine + H(+). It catalyses the reaction 7-methylxanthine + S-adenosyl-L-methionine = theobromine + S-adenosyl-L-homocysteine + H(+). It participates in alkaloid biosynthesis. Its function is as follows. Involved in the biosynthesis of caffeine. Catalyzes the conversion of 7-methylxanthine (7mX) to theobromine and of theobromine to caffeine. The polypeptide is Caffeine synthase 1 (Camellia taliensis (Wild tea)).